The chain runs to 312 residues: Mevalonate kinase (312 aa).

An ATP-binding site is contributed by 104-114 (PISCGLGSSAS). The active-site Proton acceptor is Asp-155.

Belongs to the GHMP kinase family. Mevalonate kinase subfamily. Homodimer. Mg(2+) is required as a cofactor.

The protein resides in the cytoplasm. The catalysed reaction is (R)-mevalonate + ATP = (R)-5-phosphomevalonate + ADP + H(+). The protein operates within isoprenoid biosynthesis; isopentenyl diphosphate biosynthesis via mevalonate pathway; isopentenyl diphosphate from (R)-mevalonate: step 1/3. Its activity is regulated as follows. Farnesyl- and geranyl-pyrophosphates are competitive inhibitors. Slightly inhibited by high concentration of ATP. Its function is as follows. Catalyzes the phosphorylation of (R)-mevalonate (MVA) to (R)-mevalonate 5-phosphate (MVAP). Functions in the mevalonate (MVA) pathway leading to isopentenyl diphosphate (IPP), a key precursor for the biosynthesis of isoprenoid compounds such as archaeal membrane lipids. The polypeptide is Mevalonate kinase (Methanocaldococcus jannaschii (strain ATCC 43067 / DSM 2661 / JAL-1 / JCM 10045 / NBRC 100440) (Methanococcus jannaschii)).